A 610-amino-acid polypeptide reads, in one-letter code: MKHQRVPVMILHSKGTMASWPFSRLWSISDPILFQVTLVATLLATVLGSCGIPPYLDFAFPINELNETRFETGTTLRYTCRPGYRISSRKNFLICDGTDNWKYKEFCVKKRCENPGELLNGQVIVKTDYSFGSEIEFSCSEGYVLIGSANSYCQLQDKGVVWSDPLPQCIIAKCEPPPTISNGRHNGGDEDFYTYGSSVTYSCDRDFSMLGKASISCRVENKTIGVWSPSPPSCKKVICVQPVVKDGKITSGFGPIYTYQQSIVYACNKGFRLEGDSLIHCEADNSWNPPPPTCELNGCLGLPHIPHALWERYDHQTQTEQQVYDIGFVLSYKCHFGYKPETDGPTTVTCQSNLEWSPYIECKEVCCPEPNLNNYGSITLHRRPSTSTHCTYISGDKISYECHSKYMFDALCTKHGTWSPRTPECRPDCKSPPVIAHGQHKVVSKFFTFDHQAVYECDKGYILVGAKELSCTSSGWSPAVPQCKALCLKPEIEYGRLSVEKVRYVEPEIITIQCESGYSVVGSENITCSEDRTWYPEVPKCEWEYPEGCEQVVTGRKLLQCLSRPEEVKLALEVYKLSLEIEILQTNKLKKEAFLLREREKNVTCDFNPE.

An N-terminal signal peptide occupies residues 1–48 (MKHQRVPVMILHSKGTMASWPFSRLWSISDPILFQVTLVATLLATVLG). 8 Sushi domains span residues 49-109 (SCGI…FCVK), 110-171 (KRCE…QCII), 172-236 (AKCE…SCKK), 237-296 (VICV…TCEL), 297-364 (NGCL…ECKE), 365-427 (VCCP…ECRP), 428-485 (DCKS…QCKA), and 486-543 (LCLK…KCEW). Cystine bridges form between Cys-50-Cys-95, Cys-80-Cys-107, Cys-112-Cys-153, Cys-139-Cys-169, Cys-174-Cys-217, Cys-203-Cys-234, Cys-239-Cys-281, Cys-267-Cys-294, Cys-299-Cys-350, Cys-334-Cys-362, Cys-367-Cys-412, Cys-402-Cys-425, Cys-429-Cys-471, Cys-457-Cys-483, Cys-487-Cys-528, and Cys-514-Cys-541. An N-linked (GlcNAc...) asparagine glycan is attached at Asn-66. An N-linked (GlcNAc...) asparagine glycan is attached at Asn-221. 2 N-linked (GlcNAc...) asparagine glycosylation sites follow: Asn-525 and Asn-602.

In terms of assembly, disulfide-linked complex of alpha and beta chains.

Its subcellular location is the secreted. Functionally, controls the classical pathway of complement activation. It binds as a cofactor to C3b/C4b inactivator (C3bINA), which then hydrolyzes the complement fragment C4b. It also accelerates the degradation of the C4bC2a complex (C3 convertase) by dissociating the complement fragment C2a. Alpha chain binds C4b. It also interacts with serum amyloid P component. The protein is C4b-binding protein alpha chain (C4BPA) of Bos taurus (Bovine).